The sequence spans 664 residues: MFQDNPLLAQLKQQIQENLPKKEGTIKATEKGFGFLEVDSKTSFFIPPAYMKKCMHGDKVIAIIRTENEREVAEPQELVEQMLNRFIGRVKMFKGKLNVVPDHPQLKKMSLKAKTKKGLNPQEFAEGDWVVGHLIRHPLKDDNGFFVEISEKITDADDKIAPWWVTLAENDLPNSEPAGIDDWQIKDDADLERIDMTHIPFVTIDGESTKDMDDALYAKKNDAGDFELTIAIADPTAYITPDDEMDKVARERGFTIYLPGRNIPMLPRDLADELCSLIEGEIRPALCCTVTVSKDGVIGDDIQFFAANIKSHARLAYDNVSDWLETGSCEKWQPSEEIAAIVRDLYEFSQARAEWREKNAVVFPDRPDYRFELSEDNDVVAIHADMRRSANRLVEESMITANICAGKTLQGHFGTGVFNCHAGFKPEKIADVVELVNPEGTLEFTAESIATREGFAALRRWLSKQETTYLDNRIRKFQTYSEVSNQPLPHYAMGLDIYATWTSPIRKYGDMINHRMLKALILNKEPVQKPDDSVGEELALHRKHHKIAERNVADWLYARTLADAPENQTLFTGEIFDINRAGMRIRLLENGAAAFIPGSLIIDNKERIECNGDLGTVSIDKEVVYKLGDVLEVVLADVNQENRSLVAKPTQVFAELPVVEETQN.

Residues 193–521 (RIDMTHIPFV…INHRMLKALI (329 aa)) form the RNB domain. In terms of domain architecture, S1 motif spans 568 to 650 (QTLFTGEIFD…ENRSLVAKPT (83 aa)).

Belongs to the RNR ribonuclease family. RNase II subfamily.

Its subcellular location is the cytoplasm. It catalyses the reaction Exonucleolytic cleavage in the 3'- to 5'-direction to yield nucleoside 5'-phosphates.. Involved in mRNA degradation. Hydrolyzes single-stranded polyribonucleotides processively in the 3' to 5' direction. The chain is Exoribonuclease 2 from Vibrio vulnificus (strain CMCP6).